Consider the following 410-residue polypeptide: Probable nicotinate phosphoribosyltransferase (410 aa).

Positions 15, 170, and 220 each coordinate nicotinate. The residue at position 223 (His223) is a Phosphohistidine. Thr348 serves as a coordination point for 5-phospho-alpha-D-ribose 1-diphosphate.

This sequence belongs to the NAPRTase family. It depends on Mg(2+) as a cofactor. Mn(2+) is required as a cofactor. In terms of processing, transiently phosphorylated on a His residue during the reaction cycle. Phosphorylation strongly increases the affinity for substrates and increases the rate of nicotinate D-ribonucleotide production. Dephosphorylation regenerates the low-affinity form of the enzyme, leading to product release.

It catalyses the reaction nicotinate + 5-phospho-alpha-D-ribose 1-diphosphate + ATP + H2O = nicotinate beta-D-ribonucleotide + ADP + phosphate + diphosphate. Its pathway is cofactor biosynthesis; NAD(+) biosynthesis; nicotinate D-ribonucleotide from nicotinate: step 1/1. In terms of biological role, catalyzes the first step in the biosynthesis of NAD from nicotinic acid, the ATP-dependent synthesis of beta-nicotinate D-ribonucleotide from nicotinate and 5-phospho-D-ribose 1-phosphate. Helps prevent cellular oxidative stress via its role in NAD biosynthesis. This is Probable nicotinate phosphoribosyltransferase from Schizosaccharomyces pombe (strain 972 / ATCC 24843) (Fission yeast).